The following is a 604-amino-acid chain: Glutamine--fructose-6-phosphate aminotransferase [isomerizing] (604 aa).

Cys-2 serves as the catalytic Nucleophile; for GATase activity. A Glutamine amidotransferase type-2 domain is found at 2-218; the sequence is CGIVGVVGNR…DKELVILTKD (217 aa). SIS domains lie at 284–423 and 456–594; these read IITS…ANGK and VQAL…VDKP. The For Fru-6P isomerization activity role is filled by Lys-599.

As to quaternary structure, homodimer.

It is found in the cytoplasm. The catalysed reaction is D-fructose 6-phosphate + L-glutamine = D-glucosamine 6-phosphate + L-glutamate. Functionally, catalyzes the first step in hexosamine metabolism, converting fructose-6P into glucosamine-6P using glutamine as a nitrogen source. In Streptococcus pyogenes serotype M18 (strain MGAS8232), this protein is Glutamine--fructose-6-phosphate aminotransferase [isomerizing].